The following is a 907-amino-acid chain: Protein translocase subunit SecA (907 aa).

ATP-binding positions include glutamine 87, 105–109 (GEGKT), and aspartate 512. The tract at residues 862–885 (AENQLDDGHSSDQNHSPMVRDERK) is disordered. Residues 867–885 (DDGHSSDQNHSPMVRDERK) show a composition bias toward basic and acidic residues. Residues cysteine 892, cysteine 894, cysteine 903, and histidine 904 each contribute to the Zn(2+) site.

It belongs to the SecA family. As to quaternary structure, monomer and homodimer. Part of the essential Sec protein translocation apparatus which comprises SecA, SecYEG and auxiliary proteins SecDF-YajC and YidC. The cofactor is Zn(2+).

It is found in the cell inner membrane. The protein resides in the cytoplasm. It catalyses the reaction ATP + H2O + cellular proteinSide 1 = ADP + phosphate + cellular proteinSide 2.. In terms of biological role, part of the Sec protein translocase complex. Interacts with the SecYEG preprotein conducting channel. Has a central role in coupling the hydrolysis of ATP to the transfer of proteins into and across the cell membrane, serving both as a receptor for the preprotein-SecB complex and as an ATP-driven molecular motor driving the stepwise translocation of polypeptide chains across the membrane. The polypeptide is Protein translocase subunit SecA (Aliivibrio salmonicida (strain LFI1238) (Vibrio salmonicida (strain LFI1238))).